The primary structure comprises 98 residues: NADH-ubiquinone oxidoreductase chain 4L (98 aa).

The next 3 membrane-spanning stretches (helical) occupy residues 1 to 21, 29 to 49, and 61 to 81; these read MSLV…GLLM, SLLC…IMIL, and IILL…LVMV.

Belongs to the complex I subunit 4L family. In terms of assembly, core subunit of respiratory chain NADH dehydrogenase (Complex I) which is composed of 45 different subunits.

It is found in the mitochondrion inner membrane. It carries out the reaction a ubiquinone + NADH + 5 H(+)(in) = a ubiquinol + NAD(+) + 4 H(+)(out). Core subunit of the mitochondrial membrane respiratory chain NADH dehydrogenase (Complex I) which catalyzes electron transfer from NADH through the respiratory chain, using ubiquinone as an electron acceptor. Part of the enzyme membrane arm which is embedded in the lipid bilayer and involved in proton translocation. The protein is NADH-ubiquinone oxidoreductase chain 4L (MT-ND4L) of Urotrichus talpoides (Japanese shrew mole).